The chain runs to 340 residues: UDP-N-acetylenolpyruvoylglucosamine reductase (340 aa).

In terms of domain architecture, FAD-binding PCMH-type spans 14–185 (HVEATARWLL…VAVEFNLPLL (172 aa)). Residue arginine 162 is part of the active site. Serine 235 functions as the Proton donor in the catalytic mechanism. Glutamate 332 is a catalytic residue.

The protein belongs to the MurB family. FAD is required as a cofactor.

The protein resides in the cytoplasm. The enzyme catalyses UDP-N-acetyl-alpha-D-muramate + NADP(+) = UDP-N-acetyl-3-O-(1-carboxyvinyl)-alpha-D-glucosamine + NADPH + H(+). Its pathway is cell wall biogenesis; peptidoglycan biosynthesis. Cell wall formation. The chain is UDP-N-acetylenolpyruvoylglucosamine reductase from Xanthomonas oryzae pv. oryzae (strain KACC10331 / KXO85).